A 303-amino-acid chain; its full sequence is Vacuolar protein sorting-associated protein 26B (303 aa).

Belongs to the VPS26 family. Component of the retromer complex which consists of VPS29 (MAG1), VPS26 (VPS26A or VPS26B), VPS35 (VPS35A or VPS35B or VPS35C), VPS5/17 (SNX1 or SNX2A or SNX2B). Component of a retromer subcomplex consisting of VPS29 (MAG1), VPS26 (VPS26A or VPS26B), VPS35 (VPS35A or VPS35B or VPS35C).

The protein localises to the cytoplasm. Its subcellular location is the endosome membrane. It localises to the prevacuolar compartment membrane. It is found in the golgi apparatus. The protein resides in the trans-Golgi network membrane. In terms of biological role, plays a role in vesicular protein sorting. Component of the membrane-associated retromer complex which is essential in endosome-to-Golgi retrograde transport. The VPS29-VPS26-VPS35 subcomplex may be involved in recycling of specific cargos from endosome to the plasma membrane. This is Vacuolar protein sorting-associated protein 26B (VPS26B) from Arabidopsis thaliana (Mouse-ear cress).